The chain runs to 272 residues: Large ribosomal subunit protein uL2 (272 aa).

The interval 247–272 (PWGQPCKGFKTRNNKRTNSSIIKRRK) is disordered. Over residues 262–272 (RTNSSIIKRRK) the composition is skewed to polar residues.

The protein belongs to the universal ribosomal protein uL2 family. Part of the 50S ribosomal subunit. Forms a bridge to the 30S subunit in the 70S ribosome.

Functionally, one of the primary rRNA binding proteins. Required for association of the 30S and 50S subunits to form the 70S ribosome, for tRNA binding and peptide bond formation. It has been suggested to have peptidyltransferase activity; this is somewhat controversial. Makes several contacts with the 16S rRNA in the 70S ribosome. This is Large ribosomal subunit protein uL2 from Bdellovibrio bacteriovorus (strain ATCC 15356 / DSM 50701 / NCIMB 9529 / HD100).